A 199-amino-acid polypeptide reads, in one-letter code: Photosystem I reaction center subunit XI (199 aa).

2 helical membrane-spanning segments follow: residues 108 to 128 and 165 to 185; these read VTAG…LLVL and FWLG…TLHL.

It belongs to the PsaL family.

The protein localises to the cellular thylakoid membrane. This is Photosystem I reaction center subunit XI from Prochlorococcus marinus (strain MIT 9215).